Reading from the N-terminus, the 250-residue chain is IEITANILKFQDADGKHLLPKIRDSAGQKGTGKWTAISALEYGVPVTLIGEAVFARCLSSLKDERVQASKKLKGPQKIQFSGDKKSFLEDIRKALYASKIISYTQGFMLLRQAAAEFGWSSTTEHRLMWRGGCIIRSVFLGKIKDAFDRNPGLQNLLLDDFFKSAVEDCQDSWRRAVSTGVQTGIPMPCFTTALSFYDGYRHEMLPANLIQAQRDYFGAHTYELLAKPGHFVHTNWTGHGGSVSSSSYNA.

The substrate site is built by K29 and R56. K77 is subject to N6-acetyllysine. Substrate-binding residues include R214 and H220. Position 245–248 (245–248 (SSSY)) interacts with NADP(+).

The protein belongs to the 6-phosphogluconate dehydrogenase family. In terms of assembly, homodimer.

The protein localises to the cytoplasm. The enzyme catalyses 6-phospho-D-gluconate + NADP(+) = D-ribulose 5-phosphate + CO2 + NADPH. It participates in carbohydrate degradation; pentose phosphate pathway; D-ribulose 5-phosphate from D-glucose 6-phosphate (oxidative stage): step 3/3. Catalyzes the oxidative decarboxylation of 6-phosphogluconate to ribulose 5-phosphate and CO(2), with concomitant reduction of NADP to NADPH. In Sus scrofa (Pig), this protein is 6-phosphogluconate dehydrogenase, decarboxylating (PGD).